The chain runs to 1409 residues: DNA-directed RNA polymerase subunit beta' (1409 aa).

Positions 70, 72, 85, and 88 each coordinate Zn(2+). Mg(2+)-binding residues include D458, D460, and D462. The Zn(2+) site is built by C813, C887, C894, and C897.

The protein belongs to the RNA polymerase beta' chain family. The RNAP catalytic core consists of 2 alpha, 1 beta, 1 beta' and 1 omega subunit. When a sigma factor is associated with the core the holoenzyme is formed, which can initiate transcription. The cofactor is Mg(2+). It depends on Zn(2+) as a cofactor.

The enzyme catalyses RNA(n) + a ribonucleoside 5'-triphosphate = RNA(n+1) + diphosphate. Its function is as follows. DNA-dependent RNA polymerase catalyzes the transcription of DNA into RNA using the four ribonucleoside triphosphates as substrates. The polypeptide is DNA-directed RNA polymerase subunit beta' (Delftia acidovorans (strain DSM 14801 / SPH-1)).